A 154-amino-acid polypeptide reads, in one-letter code: MRKQVEIFTDGSCLGNPGPGGYGAVLRYKQHEKALSAGYRLTTNNRMELMAAIAALETLTTDCDIVLSTDSQYVRQGITSWIHNWKKRSWKTADKKPVKNVDLWKRLDTAIQRHSVRWEWVKGHAGHPENERCDELARAAASAPTLDDTGYQAE.

Positions M1–S142 constitute an RNase H type-1 domain. Positions 10, 48, 70, and 134 each coordinate Mg(2+).

This sequence belongs to the RNase H family. As to quaternary structure, monomer. Mg(2+) serves as cofactor.

Its subcellular location is the cytoplasm. The enzyme catalyses Endonucleolytic cleavage to 5'-phosphomonoester.. Its function is as follows. Endonuclease that specifically degrades the RNA of RNA-DNA hybrids. The protein is Ribonuclease H of Pectobacterium atrosepticum (strain SCRI 1043 / ATCC BAA-672) (Erwinia carotovora subsp. atroseptica).